The chain runs to 630 residues: Succinate dehydrogenase [ubiquinone] flavoprotein subunit, mitochondrial (630 aa).

The N-terminal 31 residues, 1–31, are a transit peptide targeting the mitochondrion; it reads MWRGCVSRGLRSLSKGKGSSSSAPVSAAARL. FAD-binding positions include 52-57, 75-90, and Asp260; these read GAGGAG and TKLFPTRSHTVAAQGG. His83 carries the post-translational modification Tele-8alpha-FAD histidine. Substrate is bound by residues His281 and Thr293. The active-site Proton acceptor is Arg325. His392 provides a ligand contact to substrate. Glu426 provides a ligand contact to FAD. Arg437 lines the substrate pocket. Residue 442 to 443 participates in FAD binding; that stretch reads SL.

It belongs to the FAD-dependent oxidoreductase 2 family. FRD/SDH subfamily. In terms of assembly, component of complex II composed of eight subunits in plants: four classical SDH subunits SDH1, SDH2, SDH3 and SDH4 (a flavoprotein (FP), an iron-sulfur protein (IP), and a cytochrome b composed of a large and a small subunit.), as well as four subunits unknown in mitochondria from bacteria and heterotrophic eukaryotes. It depends on FAD as a cofactor.

The protein resides in the mitochondrion inner membrane. It catalyses the reaction a quinone + succinate = fumarate + a quinol. Its pathway is carbohydrate metabolism; tricarboxylic acid cycle; fumarate from succinate (eukaryal route): step 1/1. Functionally, flavoprotein (FP) subunit of succinate dehydrogenase (SDH) that is involved in complex II of the mitochondrial electron transport chain and is responsible for transferring electrons from succinate to ubiquinone (coenzyme Q). The chain is Succinate dehydrogenase [ubiquinone] flavoprotein subunit, mitochondrial (SDH1) from Oryza sativa subsp. japonica (Rice).